Reading from the N-terminus, the 380-residue chain is DNA replication and repair protein RecF (380 aa).

30 to 37 (GENAQGKT) contacts ATP.

This sequence belongs to the RecF family.

It localises to the cytoplasm. In terms of biological role, the RecF protein is involved in DNA metabolism; it is required for DNA replication and normal SOS inducibility. RecF binds preferentially to single-stranded, linear DNA. It also seems to bind ATP. The chain is DNA replication and repair protein RecF from Synechococcus sp. (strain JA-2-3B'a(2-13)) (Cyanobacteria bacterium Yellowstone B-Prime).